Consider the following 172-residue polypeptide: uncharacterized protein (172 aa).

This sequence belongs to the archaeal NMN adenylyltransferase family.

This is an uncharacterized protein from Aeropyrum pernix (strain ATCC 700893 / DSM 11879 / JCM 9820 / NBRC 100138 / K1).